We begin with the raw amino-acid sequence, 153 residues long: Gamma-glutamylaminecyclotransferase (153 aa).

Residue 7–10 participates in substrate binding; that stretch reads YGTL. The active-site Proton acceptor is the glutamate 82. Residues 130-153 are disordered; sequence QLPHHDSYDSEGPHGLRYNPRENR. Residues 132–153 show a composition bias toward basic and acidic residues; that stretch reads PHHDSYDSEGPHGLRYNPRENR.

It belongs to the gamma-glutamylcyclotransferase family. Monomer.

It catalyses the reaction epsilon-(gamma-L-glutamyl)-L-lysine = 5-oxo-L-proline + L-lysine. Contributes to degradation of proteins cross-linked by transglutaminases by degrading the cross-link between a lysine and a glutamic acid residue. Catalyzes the formation of 5-oxo-L-proline from L-gamma-glutamyl-L-epsilon-lysine. Inactive with L-gamma-glutamyl-alpha-amino acid substrates such as L-gamma-glutamyl-L-alpha-cysteine and L-gamma-glutamyl-L-alpha-alanine. In Homo sapiens (Human), this protein is Gamma-glutamylaminecyclotransferase (GGACT).